A 136-amino-acid polypeptide reads, in one-letter code: IIFPGTLWCGNGNLANGTNQLGSWKETDSCCRTHDMCPDLIEAHGSKHGLTNAADYTRLSCECDEEFRRCLHNSGDTVSAGFVGRTYFTVLHTQCFRLDYPIVKCKVKSTILHRSKCYDFETFAPKKYQWFDVLQY.

Ca(2+)-binding residues include tryptophan 8, glycine 10, and glycine 12. 5 cysteine pairs are disulfide-bonded: cysteine 9–cysteine 31, cysteine 30–cysteine 70, cysteine 37–cysteine 63, cysteine 61–cysteine 95, and cysteine 105–cysteine 117. The N-linked (GlcNAc...) asparagine glycan is linked to asparagine 16. The active site involves histidine 34. Residue aspartate 35 coordinates Ca(2+). Aspartate 64 is an active-site residue.

It belongs to the phospholipase A2 family. The cofactor is Ca(2+). As to expression, expressed by the venom gland.

It is found in the secreted. It carries out the reaction a 1,2-diacyl-sn-glycero-3-phosphocholine + H2O = a 1-acyl-sn-glycero-3-phosphocholine + a fatty acid + H(+). Its function is as follows. PLA2 catalyzes the calcium-dependent hydrolysis of the 2-acyl groups in 3-sn-phosphoglycerides. The chain is Phospholipase A2 from Bombus terrestris (Buff-tailed bumblebee).